Here is a 93-residue protein sequence, read N- to C-terminus: Small ribosomal subunit protein uS19 (93 aa).

Disordered regions lie at residues 1–25 (MPRS…QNTK) and 74–93 (FAPT…ARRR). Composition is skewed to basic and acidic residues over residues 14–23 (HLQKKVDDQN) and 81–93 (RGHD…ARRR).

This sequence belongs to the universal ribosomal protein uS19 family.

Functionally, protein S19 forms a complex with S13 that binds strongly to the 16S ribosomal RNA. This Beutenbergia cavernae (strain ATCC BAA-8 / DSM 12333 / CCUG 43141 / JCM 11478 / NBRC 16432 / NCIMB 13614 / HKI 0122) protein is Small ribosomal subunit protein uS19.